Consider the following 391-residue polypeptide: Acetyl-CoA acetyltransferase (391 aa).

Cys88 acts as the Acyl-thioester intermediate in catalysis. Active-site proton acceptor residues include His347 and Cys377.

It belongs to the thiolase-like superfamily. Thiolase family. In terms of assembly, homotetramer.

It is found in the cytoplasm. The catalysed reaction is 2 acetyl-CoA = acetoacetyl-CoA + CoA. The protein operates within metabolic intermediate biosynthesis; (R)-mevalonate biosynthesis; (R)-mevalonate from acetyl-CoA: step 1/3. The chain is Acetyl-CoA acetyltransferase (phaA) from Paracoccus denitrificans.